The following is a 481-amino-acid chain: uncharacterized protein (481 aa).

13 helical membrane passes run 3-23, 33-53, 75-95, 99-119, 122-142, 155-175, 196-216, 241-261, 264-284, 303-323, 351-371, 400-420, and 443-463; these read YLPMMIVFPLIMAIIMNLLHG, FITAAILIILPFISQYGYYYF, QAIIVTLSLIASLVLITGMGE, NNMFVTLSLMGFASIAAIVLA, IFNLYVFFEIVSIVQAGLVFL, YMIMGNVAAALMLLGIAFLLA, IYGGLLLLIVGLAYGAGLPPF, FVLVGLMIIILKLFNGLDYFA, HAVLIALGVLAMVFGVVMALL, VATGLALGTPLGIVAGIFHAI, GGLLPLMPSVAFMVLCAKLAI, IIMIIVSIGTFVSMMKAFYLI, and VFSLFVLTALCIIIGLYPDIV.

Its subcellular location is the cell membrane. This is an uncharacterized protein from Methanocaldococcus jannaschii (strain ATCC 43067 / DSM 2661 / JAL-1 / JCM 10045 / NBRC 100440) (Methanococcus jannaschii).